The primary structure comprises 512 residues: ATP synthase subunit alpha (512 aa).

169–176 (GDRQTGKT) contacts ATP.

It belongs to the ATPase alpha/beta chains family. F-type ATPases have 2 components, CF(1) - the catalytic core - and CF(0) - the membrane proton channel. CF(1) has five subunits: alpha(3), beta(3), gamma(1), delta(1), epsilon(1). CF(0) has three main subunits: a(1), b(2) and c(9-12). The alpha and beta chains form an alternating ring which encloses part of the gamma chain. CF(1) is attached to CF(0) by a central stalk formed by the gamma and epsilon chains, while a peripheral stalk is formed by the delta and b chains.

It localises to the cell inner membrane. The enzyme catalyses ATP + H2O + 4 H(+)(in) = ADP + phosphate + 5 H(+)(out). Its function is as follows. Produces ATP from ADP in the presence of a proton gradient across the membrane. The alpha chain is a regulatory subunit. This chain is ATP synthase subunit alpha, found in Aromatoleum aromaticum (strain DSM 19018 / LMG 30748 / EbN1) (Azoarcus sp. (strain EbN1)).